The chain runs to 1264 residues: Kinesin-like protein KIN-14B (1264 aa).

Over residues 1 to 10 (MAEQKSTNMW) the composition is skewed to polar residues. The interval 1–52 (MAEQKSTNMWNWEVTGFESKKSPSSEEGVHRTPSSMLRRYSIPKNSLPPHSS) is disordered. Basic and acidic residues predominate over residues 18-30 (ESKKSPSSEEGVH). A coiled-coil region spans residues 53–84 (ELASKVQSLKDKVQLAKDDYVGLRQEATDLQE). The region spanning 138-452 (NVKVFCRARP…LNYAARARNT (315 aa)) is the Kinesin motor domain. An ATP-binding site is contributed by 219 to 226 (GQTHAGKT). 3 coiled-coil regions span residues 462–511 (IKKW…YNEV), 545–592 (QLRN…LKSD), and 617–640 (TKKL…ENEK). The interval 588 to 615 (ALKSDMTRSRDPLEPQPRAAENTLDSSA) is disordered. The span at 589–600 (LKSDMTRSRDPL) shows a compositional bias: basic and acidic residues. Residues 652–668 (SSTQVSSPSSKASPTVQ) are compositionally biased toward low complexity. Disordered regions lie at residues 652-684 (SSTQ…SVDK) and 1117-1136 (PEQE…SISS).

Belongs to the TRAFAC class myosin-kinesin ATPase superfamily. Kinesin family. KIN-14 subfamily. As to quaternary structure, homodimer and heterodimer with KCA1. Interacts with CDKA-1. Interacts with At4g14310. Expressed in roots, leaves, stems and flowers.

The protein resides in the cell membrane. Kinesin-like protein required for chloroplast movements and anchor to the plasma membrane. Mediates chloroplast movement via chloroplast actin (cp-actin) filaments. Required for the chloroplast avoidance response under high intensity blue light. Mediates redundantly with CHUP1 the nuclear avoidance response under high intensity blue light. May be involved in division plane determination. This Arabidopsis thaliana (Mouse-ear cress) protein is Kinesin-like protein KIN-14B.